Reading from the N-terminus, the 289-residue chain is Lipoyl synthase 2 (289 aa).

[4Fe-4S] cluster contacts are provided by cysteine 43, cysteine 48, cysteine 54, cysteine 69, cysteine 73, cysteine 76, and serine 282. One can recognise a Radical SAM core domain in the interval 55–271 (YAQKTATFLL…GAVARDLGFA (217 aa)).

Belongs to the radical SAM superfamily. Lipoyl synthase family. Requires [4Fe-4S] cluster as cofactor.

The protein resides in the cytoplasm. It carries out the reaction [[Fe-S] cluster scaffold protein carrying a second [4Fe-4S](2+) cluster] + N(6)-octanoyl-L-lysyl-[protein] + 2 oxidized [2Fe-2S]-[ferredoxin] + 2 S-adenosyl-L-methionine + 4 H(+) = [[Fe-S] cluster scaffold protein] + N(6)-[(R)-dihydrolipoyl]-L-lysyl-[protein] + 4 Fe(3+) + 2 hydrogen sulfide + 2 5'-deoxyadenosine + 2 L-methionine + 2 reduced [2Fe-2S]-[ferredoxin]. It functions in the pathway protein modification; protein lipoylation via endogenous pathway; protein N(6)-(lipoyl)lysine from octanoyl-[acyl-carrier-protein]: step 2/2. Its function is as follows. Catalyzes the radical-mediated insertion of two sulfur atoms into the C-6 and C-8 positions of the octanoyl moiety bound to the lipoyl domains of lipoate-dependent enzymes, thereby converting the octanoylated domains into lipoylated derivatives. This chain is Lipoyl synthase 2, found in Gloeobacter violaceus (strain ATCC 29082 / PCC 7421).